Here is a 98-residue protein sequence, read N- to C-terminus: NADH-ubiquinone oxidoreductase chain 4L (98 aa).

A run of 3 helical transmembrane segments spans residues 1–21 (MPFI…GLLI), 29–49 (SLLC…TMTL), and 61–81 (IILL…LILI).

The protein belongs to the complex I subunit 4L family. As to quaternary structure, core subunit of respiratory chain NADH dehydrogenase (Complex I) which is composed of 45 different subunits.

It is found in the mitochondrion inner membrane. It carries out the reaction a ubiquinone + NADH + 5 H(+)(in) = a ubiquinol + NAD(+) + 4 H(+)(out). Core subunit of the mitochondrial membrane respiratory chain NADH dehydrogenase (Complex I) which catalyzes electron transfer from NADH through the respiratory chain, using ubiquinone as an electron acceptor. Part of the enzyme membrane arm which is embedded in the lipid bilayer and involved in proton translocation. The protein is NADH-ubiquinone oxidoreductase chain 4L (MT-ND4L) of Cebus albifrons (White-fronted capuchin).